Here is a 174-residue protein sequence, read N- to C-terminus: Cytochrome c-550-like protein (174 aa).

An N-terminal signal peptide occupies residues 1–37; sequence MPGQTQGAKRWRVPGRGWRWAGILLLVWLGLASPAAG. Positions 82, 85, 86, and 136 each coordinate heme c.

It belongs to the cytochrome c family. PsbV subfamily. Requires heme c as cofactor.

The protein localises to the cellular thylakoid membrane. In terms of biological role, possible low-potential cytochrome c. The sequence is that of Cytochrome c-550-like protein (psbV2) from Synechococcus sp. (strain JA-3-3Ab) (Cyanobacteria bacterium Yellowstone A-Prime).